The chain runs to 216 residues: Ribosomal RNA large subunit methyltransferase E (216 aa).

Residues G60, W62, D80, D96, and D121 each contribute to the S-adenosyl-L-methionine site. K161 functions as the Proton acceptor in the catalytic mechanism.

Belongs to the class I-like SAM-binding methyltransferase superfamily. RNA methyltransferase RlmE family.

The protein localises to the cytoplasm. It carries out the reaction uridine(2552) in 23S rRNA + S-adenosyl-L-methionine = 2'-O-methyluridine(2552) in 23S rRNA + S-adenosyl-L-homocysteine + H(+). Specifically methylates the uridine in position 2552 of 23S rRNA at the 2'-O position of the ribose in the fully assembled 50S ribosomal subunit. This is Ribosomal RNA large subunit methyltransferase E from Pseudomonas syringae pv. syringae (strain B728a).